Here is a 284-residue protein sequence, read N- to C-terminus: N-methyltransferase sirN (284 aa).

Belongs to the methyltransferase superfamily. LaeA methyltransferase family.

Its pathway is mycotoxin biosynthesis. N-methyltransferase; part of the gene cluster that mediates the biosynthesis of sirodesmin PL, an epipolythiodioxopiperazine (ETP) characterized by a disulfide bridged cyclic dipeptide and that acts as a phytotoxin which is involved in the blackleg didease of canola. SirD catalyzes the O-prenylation of L-tyrosine (L-Tyr) in the presence of dimethylallyl diphosphate (DMAPP) to yield 4-O-dimethylallyl-L-Tyr, and therefore represents probably the first pathway-specific enzyme in the biosynthesis of sirodesmin PL. 4-O-dimethylallyl-L-Tyr, then undergoes condensation with L-Ser in a reaction catalyzed by the non-ribosomal peptide synthase sirP to form the diketopiperazine (DKP) backbone. Further bishydroxylation of the DKP performed by the cytochrome P450 monooxygenase sirC leads to the production of the intermediate phomamide. This step is essential to form the reactive thiol group required for toxicity of sirodesmin PL. The next steps of sirodesmin biosynthesis are not well understood yet but some predictions could be made from intermediate compounds identification. Phomamide is converted into phomalizarine via oxidation, probably by sirT. Further oxidation, methylation (by sirM or sirN) and reduction steps convert phomalizarine to deacetyl sirodesmin. Finally, acetyltransferase sirH probably acetylates deacetyl sirodesmin to produce sirodesmin PL. In Leptosphaeria maculans (Blackleg fungus), this protein is N-methyltransferase sirN.